The chain runs to 359 residues: Guanine nucleotide-binding protein G(q) subunit alpha (359 aa).

S-palmitoyl cysteine attachment occurs at residues Cys9 and Cys10. Residues 38 to 359 (RELKLLLLGT…QLNLKEYNLV (322 aa)) form the G-alpha domain. Residues 41–54 (KLLLLGTGESGKST) are G1 motif. Positions 50, 51, 52, 53, 54, 156, 180, 181, and 183 each coordinate GTP. Ser53 contributes to the Mg(2+) binding site. The G2 motif stretch occupies residues 178-186 (DVLRVRVPT). Thr186 is a binding site for Mg(2+). The tract at residues 201–210 (FRMVDVGGQR) is G3 motif. Residue Gln209 is modified to 5-glutamyl histamine. Residues 270 to 277 (ILFLNKKD) are G4 motif. GTP contacts are provided by Asn274, Lys275, Asp277, and Ala331. The interval 329–334 (TCATDT) is G5 motif.

The protein belongs to the G-alpha family. G(q) subfamily. In terms of assembly, g proteins are composed of 3 units; alpha, beta and gamma. The alpha chain contains the guanine nucleotide binding site. Interacts (GDP-bound form) with RIC8A (via C-terminus); promoting GNAQ folding and association with the plasma membrane. Binds NHERF1. Forms a complex with PECAM1 and BDKRB2. Interacts with GAS2L2. Post-translationally, palmitoylated by ZDHHC3 and ZDHHC7. Palmitoylation occurs in the Golgi and participates in the localization of GNAQ to the plasma membrane. In terms of processing, histaminylated at Gln-209 residues by TGM2.

The protein localises to the cell membrane. It localises to the golgi apparatus. It is found in the nucleus. The protein resides in the nucleus membrane. The enzyme catalyses GTP + H2O = GDP + phosphate + H(+). In terms of biological role, guanine nucleotide-binding proteins (G proteins) function as transducers downstream of G protein-coupled receptors (GPCRs) in numerous signaling cascades. The alpha chain contains the guanine nucleotide binding site and alternates between an active, GTP-bound state and an inactive, GDP-bound state. Signaling by an activated GPCR promotes GDP release and GTP binding. The alpha subunit has a low GTPase activity that converts bound GTP to GDP, thereby terminating the signal. Both GDP release and GTP hydrolysis are modulated by numerous regulatory proteins. Signaling is mediated via phospholipase C-beta-dependent inositol lipid hydrolysis for signal propagation: activates phospholipase C-beta: following GPCR activation, GNAQ activates PLC-beta (PLCB1, PLCB2, PLCB3 or PLCB4), leading to production of diacylglycerol (DAG) and inositol 1,4,5-trisphosphate (IP3). Required for platelet activation. Regulates B-cell selection and survival and is required to prevent B-cell-dependent autoimmunity. Regulates chemotaxis of BM-derived neutrophils and dendritic cells (in vitro). Transduces FFAR4 signaling in response to long-chain fatty acids (LCFAs). Together with GNA11, required for heart development. This chain is Guanine nucleotide-binding protein G(q) subunit alpha (Gnaq), found in Mus musculus (Mouse).